Reading from the N-terminus, the 832-residue chain is Histone acetyltransferase KAT2B (832 aa).

The span at 1–22 (MSEAGGAGPGGCGAGAGAGAGP) shows a compositional bias: gly residues. 2 disordered regions span residues 1 to 54 (MSEA…ACGP) and 395 to 436 (SYNS…DSHV). Residues 24–39 (ALPPQPAALPPAPPQG) show a composition bias toward pro residues. Residues 40–54 (SPCAAAAGGSGACGP) show a composition bias toward low complexity. Residues 395–413 (SYNSTSSSLEQPNAGSSSP) show a composition bias toward polar residues. Over residues 425–436 (PGEKRKMTDSHV) the composition is skewed to basic and acidic residues. The N-acetyltransferase domain maps to 503-651 (LNQKPNKKIL…GATLMGCELN (149 aa)). Glu-570 functions as the Proton donor/acceptor in the catalytic mechanism. Acetyl-CoA-binding positions include 574 to 576 (CAV), 581 to 587 (QVKGYGT), and 612 to 615 (YAIG). The disordered stretch occupies residues 706 to 725 (IRETGWKPSGKEKSKEPRDP). Over residues 714-725 (SGKEKSKEPRDP) the composition is skewed to basic and acidic residues. The 105-residue stretch at 723 to 827 (RDPDQLYSTL…KFFFSKIKEA (105 aa)) folds into the Bromo domain.

This sequence belongs to the acetyltransferase family. GCN5 subfamily. In terms of assembly, interacts with SIRT1. Interacts (unsumoylated form) with NR2C1; the interaction promotes transactivation activity. Interacts with EP300, CREBBP and DDX17. Interacts with NCOA1 and NCOA3. Component of a large chromatin remodeling complex, at least composed of MYSM1, KAT2B/PCAF, RBM10 and KIF11/TRIP5. Interacts with NR2C2 (hypophosphorylated and unsumoylated form); the interaction promotes the transactivation activity of NR2C2. Interacts with KLF1; the interaction does not acetylate KLF1 and there is no enhancement of its transactivational activity. Interacts with NFE4. Interacts with MECOM. Interacts with E2F1; the interaction acetylates E2F1 augmenting its DNA-binding and transcriptional activity. Interacts with NPAS2, BMAL1 and CLOCK. Interacts with BCAS3. Interacts with CEBPB. Interacts with NR4A3. Interacts with NFATC2. Interacts with TBX5. Interacts with PLK4. Interacts with RB1; this interaction leads to RB1 acetylation. Interacts with VRK1. (Microbial infection) Interacts with and acetylates HIV-1 Tat. As to quaternary structure, (Microbial infection) Interacts with HTLV-1 Tax. As to expression, ubiquitously expressed but most abundant in heart and skeletal muscle. Also expressed in the skin, in keratinocytes (at protein level).

The protein localises to the nucleus. The protein resides in the cytoplasm. Its subcellular location is the cytoskeleton. It is found in the microtubule organizing center. It localises to the centrosome. It catalyses the reaction L-lysyl-[histone] + acetyl-CoA = N(6)-acetyl-L-lysyl-[histone] + CoA + H(+). The enzyme catalyses L-lysyl-[protein] + acetyl-CoA = N(6)-acetyl-L-lysyl-[protein] + CoA + H(+). It carries out the reaction spermidine + acetyl-CoA = N(8)-acetylspermidine + CoA + H(+). Its activity is regulated as follows. Activated in vitro by very low concentrations of spermidine, but inhibited at spermidine concentrations higher than 4 uM. The activating effect of low spermidine concentrations may be mediated by N(8)-acetylspermidine produced by KAT2B/P/CAF itself acting as a positive feedback loop. Its function is as follows. Functions as a histone acetyltransferase (HAT) to promote transcriptional activation. Has significant histone acetyltransferase activity with core histones (H3 and H4), and also with nucleosome core particles. Has a a strong preference for acetylation of H3 at 'Lys-9' (H3K9ac). Also acetylates non-histone proteins, such as ACLY, MAPRE1/EB1, PLK4, RRP9/U3-55K and TBX5. Inhibits cell-cycle progression and counteracts the mitogenic activity of the adenoviral oncoprotein E1A. Acts as a circadian transcriptional coactivator which enhances the activity of the circadian transcriptional activators: NPAS2-BMAL1 and CLOCK-BMAL1 heterodimers. Involved in heart and limb development by mediating acetylation of TBX5, acetylation regulating nucleocytoplasmic shuttling of TBX5. Acts as a negative regulator of centrosome amplification by mediating acetylation of PLK4. Acetylates RRP9/U3-55K, a core subunit of the U3 snoRNP complex, impairing pre-rRNA processing. Acetylates MAPRE1/EB1, promoting dynamic kinetochore-microtubule interactions in early mitosis. Also acetylates spermidine. (Microbial infection) In case of HIV-1 infection, it is recruited by the viral protein Tat. Regulates Tat's transactivating activity and may help inducing chromatin remodeling of proviral genes. This chain is Histone acetyltransferase KAT2B, found in Homo sapiens (Human).